Here is a 226-residue protein sequence, read N- to C-terminus: MIPNSFPDQAEMARLTAGMLLEIEAVHFNAREPFILASGLPSPTYIDCRKLISFPRIRSTLMDFLTVTVMREAGFEAFDNIAGGETAGIPFGALVAERLALPMTYVRKKPKGYGRDAQIEGVMREGERVLLVEDLTTDGGSKLKFVEAIRKTGATCGHTAVIFSYGIFPETESSLAAEGVKLHHLCTWWDVLAEARARGSFDPETLGAVETFLNDPRAWQEAHKRD.

5-phospho-alpha-D-ribose 1-diphosphate-binding positions include R107, K108, K111, and 133–141 (EDLTTDGGS). T137 provides a ligand contact to orotate.

Belongs to the purine/pyrimidine phosphoribosyltransferase family. PyrE subfamily. In terms of assembly, homodimer. Mg(2+) is required as a cofactor.

The catalysed reaction is orotidine 5'-phosphate + diphosphate = orotate + 5-phospho-alpha-D-ribose 1-diphosphate. The protein operates within pyrimidine metabolism; UMP biosynthesis via de novo pathway; UMP from orotate: step 1/2. Functionally, catalyzes the transfer of a ribosyl phosphate group from 5-phosphoribose 1-diphosphate to orotate, leading to the formation of orotidine monophosphate (OMP). The chain is Orotate phosphoribosyltransferase from Dinoroseobacter shibae (strain DSM 16493 / NCIMB 14021 / DFL 12).